The chain runs to 231 residues: 2-C-methyl-D-erythritol 2,4-cyclodiphosphate synthase, chloroplastic (231 aa).

The transit peptide at 1 to 52 (MATSSTQLLLSSSSLFHSQITKKPFLLPATKIGVWRPKKSLSLSCRPSASVS) directs the protein to the chloroplast. A divalent metal cation contacts are provided by aspartate 82 and histidine 84. Residues 82 to 84 (DLH), 108 to 109 (HS), 112 to 120 (DVLLHCVVD), 130 to 132 (DIG), 135 to 139 (FPDSD), aspartate 139, 174 to 180 (LQRPKIS), and 205 to 209 (AKTHE) each bind substrate. Histidine 116 contacts a divalent metal cation.

This sequence belongs to the IspF family. In terms of assembly, homotrimer. A divalent metal cation serves as cofactor.

Its subcellular location is the plastid. It localises to the chloroplast stroma. The catalysed reaction is 4-CDP-2-C-methyl-D-erythritol 2-phosphate = 2-C-methyl-D-erythritol 2,4-cyclic diphosphate + CMP. Its pathway is isoprenoid biosynthesis; isopentenyl diphosphate biosynthesis via DXP pathway; isopentenyl diphosphate from 1-deoxy-D-xylulose 5-phosphate: step 4/6. Its function is as follows. Enzyme of the plastid non-mevalonate pathway for isoprenoid biosynthesis that converts 4-diphosphocytidyl-2C-methyl-D-erythritol 2-phosphate into 2C-methyl-D-erythritol 2,4-cyclodiphosphate and CMP. Is essential for chloroplast development. The chain is 2-C-methyl-D-erythritol 2,4-cyclodiphosphate synthase, chloroplastic from Arabidopsis thaliana (Mouse-ear cress).